Consider the following 1063-residue polypeptide: MASTTPITMEDLQKALEAQSRALRAELAAGASQSRRPRPPRQRDSSTSGDDSGRDSGGPRRRRGNRGRGQRKDWSMAPPPPEERQESRSQTPAPKPSRAPPQQPQPPRMQTGRGGSAPRPELGPPTNPFQAAVARGLRPPLHDPDTEAPTEACVTSWLWSEGEGAVFYRVDLHFTNLGTPPLDEDGRWDPALMYNPCGPEPPAHVVRAYNQPAGDVRGVWGKGERTYTEQDFRVGGTRWHRLLRMPVRGLDGDSAPLPPHTTERIETRSARHPWRIRFGAPQAFLAGLLLAAVAVGTARAGLQPRADMAAPPAPPQPPCAHGQHYGHHHHQLPFLGHDGHHGGTLRVGQHHRNASDVLPGHCLQGGWGCYNLSDWHQGTHVCHTKHMDFWCVEHDRPPPATPTPLTTAANSTTAATPATAPAPCHAGLNDSCGGFLSGCGPMRLRHGADTRCGRLICGLSTTAQYPPTRFACAMRWGLPPWELVVLTARPEDGWTCRGVPAHPGTRCPELVSPMGRATCSPASALWLATANALSLDHALAAFVLLFPWVLIFMVCRRACRRRGAAAALTAVVLQGYNPPAYGEEAFTYLCTAPGCATQTPVPVRLAGVRFESKIVDGGCFAPWDLEATGACICEIPTDVSCEGLGAWVPTAPCARIWNGTQRACTFWAVNAYSSGGYAQLASYFNPGGSYYKQYHPTACEVEPAFGHSDAACWGFPTDTVMSVFALASYVQHPHKTVRVKFHTETRTVWQLSVAGVSCNVTTEHPFCNTPHGQLEVQVPPDPGDLVEYIMNYTGNQQSRWGLGSPNCHGPDWASPVCQRHSPDCSRLVGATPERPRLRLVDADDPLLRTAPGPGEVWVTPVIGSQARKCGLHIRAGPYGHATVEMPEWIHAHTTSDPWHPPGPLGLKFKTVRPVALPRALAPPRNVRVTGCYQCGTPALVEGLAPGGGNCHLTVNGEDVGAVPPGKFVTAALLNTPPPYQVSCGGESDRASARVIDPAAQSFTGVVYGTHTTAVSETRQTWAEWAAAHWWQLTLGAVCALLLAGLLACCAKCLYYLRGAIAPR.

A disordered region spans residues Met1–Ala131. A human C1QBP/SF2P32-binding region spans residues Gly30–Gly69. The residue at position 46 (Ser46) is a Phosphoserine; by host. Residues Pro59–Gly69 show a composition bias toward basic residues. Pro residues predominate over residues Ala93 to Pro107. A disulfide bridge links Cys153 with Cys197. The tract at residues Gly279 to Ala300 is functions as E2 signal peptide. Topologically, residues Gly301–Ser534 are extracellular. The interval Arg305–Val347 is disordered. N-linked (GlcNAc...) asparagine; by host glycans are attached at residues Asn353, Asn371, Asn410, and Asn429. Residues Leu535–Cys555 form a helical membrane-spanning segment. The Cytoplasmic segment spans residues Arg556–Gly582. Residues Gly563–Gly582 form a functions as E1 signal peptide region. The Extracellular segment spans residues Glu583 to His1028. Disulfide bonds link Cys590–Cys595, Cys619–Cys824, Cys641–Cys653, Cys699–Cys712, Cys758–Cys767, Cys807–Cys817, Cys931–Cys934, and Cys950–Cys983. Asn658 carries N-linked (GlcNAc...) asparagine; by host glycosylation. Asn670 and Ala671 together coordinate Ca(2+). Ca(2+)-binding residues include Asp718 and Thr719. Asn759 and Asn791 each carry an N-linked (GlcNAc...) asparagine; by host glycan. O-linked (GalNAc...) threonine; by host glycans are attached at residues Thr1011 and Thr1012. A helical membrane pass occupies residues Trp1029 to Cys1049. Over Ala1050–Arg1063 the chain is Extracellular.

In terms of assembly, homodimer; further assembles into homooligomer. Interacts with human C1QBP. Interacts (via N-terminus) with protease/methyltransferase p150. As to quaternary structure, heterodimer with spike glycoprotein E2. Heterodimer with spike glycoprotein E1. Post-translationally, structural polyprotein: Specific enzymatic cleavages in vivo yield mature proteins. Two signal peptidase-mediated cleavages within the polyprotein produce the structural proteins capsid, E2, and E1. The E2 signal peptide remains attached to the C-terminus of the capsid protein after cleavage by the signal peptidase. Another signal peptide at E2 C-terminus directs E1 to the ER, with a similar mechanism. In terms of processing, contains three N-linked oligosaccharides. Capsid is phosphorylated on Ser-46 by host. This phosphorylation negatively regulates capsid protein RNA-binding activity. Dephosphorylated by human PP1A.

The protein resides in the virion. It localises to the host cytoplasm. Its subcellular location is the host mitochondrion. It is found in the virion membrane. The protein localises to the host Golgi apparatus membrane. In terms of biological role, capsid protein interacts with genomic RNA and assembles into icosahedric core particles 65-70 nm in diameter. The resulting nucleocapsid eventually associates with the cytoplasmic domain of E2 at the cell membrane, leading to budding and formation of mature virions from host Golgi membranes. Phosphorylation negatively regulates RNA-binding activity, possibly delaying virion assembly during the viral replication phase. Capsid protein dimerizes and becomes disulfide-linked in the virion. Modulates genomic RNA replication. Modulates subgenomic RNA synthesis by interacting with human C1QBP/SF2P32. Induces both perinuclear clustering of mitochondria and the formation of electron-dense intermitochondrial plaques, both hallmarks of rubella virus infected cells. Induces apoptosis when expressed in transfected cells. Responsible for viral attachment to target host cell, by binding to the cell receptor. Its transport to the plasma membrane depends on interaction with E1 protein. The surface glycoproteins display an irregular helical organization and a pseudo-tetrameric inner nucleocapsid arrangement. Its function is as follows. Class II viral fusion protein. Fusion activity is inactive as long as E1 is bound to E2 in mature virion. After virus attachment to target cell and clathrin-mediated endocytosis, acidification of the endosome would induce dissociation of E1/E2 heterodimer and concomitant trimerization of the E1 subunits. This E1 homotrimer is fusion active, and promotes release of viral nucleocapsid in cytoplasm after endosome and viral membrane fusion. The cytoplasmic tail of spike glycoprotein E1 modulates virus release. The surface glycoproteins display an irregular helical organization and a pseudo-tetrameric inner nucleocapsid arrangement. The sequence is that of Structural polyprotein from Rubella virus (strain RN-UK86) (RUBV).